Here is a 504-residue protein sequence, read N- to C-terminus: TGF-beta-activated kinase 1 and MAP3K7-binding protein 1 (504 aa).

A disordered region spans residues 1-22 (MAAQRRSLLQSEQQPSWTDDLP). The residue at position 7 (S7) is a Phosphoserine. The span at 7–17 (SLLQSEQQPSW) shows a compositional bias: polar residues. The region spanning 28–365 (GVGSASNRSY…EDMTLLVRNF (338 aa)) is the PPM-type phosphatase domain. Position 378 is a phosphoserine (S378). S395 carries an O-linked (GlcNAc) serine glycan. Residue S423 is modified to Phosphoserine; by MAPK14. The span at 430 to 439 (ATPTLTNQSP) shows a compositional bias: polar residues. A disordered region spans residues 430 to 478 (ATPTLTNQSPTLTLQSTNTHTQSSSSSSDGGLFRSRPAHSLPPGEDGRV). Position 431 is a phosphothreonine; by MAPK14 (T431). Position 438 is a phosphoserine; by MAPK14 (S438). Residues 440–457 (TLTLQSTNTHTQSSSSSS) are compositionally biased toward low complexity. A Phosphothreonine modification is found at T442.

Interacts with XIAP and BIRC7. Interacts with TRAF6 and MAP3K7; during IL-1 signaling. Identified in the TRIKA2 complex composed of MAP3K7, TAB1 and TAB2. Interacts with TRAF6 and MAPK14; these interactions allow MAPK14 autophosphorylation. Interacts with STING1; interaction takes place following cGAMP activation and promotes TAB1 recruitment to the endoplasmic reticulum, triggering MAP3K7/TAK1 activation and STING1 phosphorylation. In terms of processing, phosphorylated at all three sites Ser-423, Thr-431 and Ser-438 by MAPK14 when cells were exposed to cellular stresses, or stimulated with TNF-alpha, IL1 or LPS. These phosphorylations inhibit TAK1 activation by a feedback control mechanism. Dephosphorylated by DUSP14 at Ser-438, leading to TAB1-MAP3K7/TAK1 complex inactivation in T-cells. Ubiquitinated by MAP3K1 with 'Lys-63'-linked polyubiquitin; leading to activation of TAK1 and of JNK and p38 MAP kinases following EGF and TGF-beta stimulation. Ubiquitinated by ITCH with 'Lys-48'-linked polyubiquitin; leading to proteasomal degradation. Ubiquitinated by RNF114 during maternal-to-zygotic transition; leading to degradation. Post-translationally, (Microbial infection) Deubiquitinated by Y.enterocolitica YopP. In terms of processing, O-GlcNAcylated at Ser-395 by OGT is required for full MAP3K7/TAK1 activation upon stimulation with IL-1 or osmotic stress. Deglycosylated at Ser-395 by OGA. As to expression, ubiquitous.

The protein resides in the cytoplasm. The protein localises to the cytosol. It is found in the endoplasmic reticulum membrane. Key adapter protein that plays an essential role in JNK and NF-kappa-B activation and proinflammatory cytokines production in response to stimulation with TLRs and cytokines. Mechanistically, associates with the catalytic domain of MAP3K7/TAK1 to trigger MAP3K7/TAK1 autophosphorylation leading to its full activation. Similarly, associates with MAPK14 and triggers its autophosphorylation and subsequent activation. In turn, MAPK14 phosphorylates TAB1 and inhibits MAP3K7/TAK1 activation in a feedback control mechanism. Also plays a role in recruiting MAPK14 to the TAK1 complex for the phosphorylation of the TAB2 and TAB3 regulatory subunits. The protein is TGF-beta-activated kinase 1 and MAP3K7-binding protein 1 (TAB1) of Homo sapiens (Human).